Here is a 613-residue protein sequence, read N- to C-terminus: Dihydroxy-acid dehydratase (613 aa).

Residue Asp81 coordinates Mg(2+). Residue Cys122 participates in [2Fe-2S] cluster binding. Mg(2+) contacts are provided by Asp123 and Lys124. Position 124 is an N6-carboxylysine (Lys124). [2Fe-2S] cluster is bound at residue Cys195. Mg(2+) is bound at residue Glu491. Ser517 functions as the Proton acceptor in the catalytic mechanism.

This sequence belongs to the IlvD/Edd family. Homodimer. It depends on [2Fe-2S] cluster as a cofactor. Mg(2+) serves as cofactor.

It carries out the reaction (2R)-2,3-dihydroxy-3-methylbutanoate = 3-methyl-2-oxobutanoate + H2O. It catalyses the reaction (2R,3R)-2,3-dihydroxy-3-methylpentanoate = (S)-3-methyl-2-oxopentanoate + H2O. The protein operates within amino-acid biosynthesis; L-isoleucine biosynthesis; L-isoleucine from 2-oxobutanoate: step 3/4. Its pathway is amino-acid biosynthesis; L-valine biosynthesis; L-valine from pyruvate: step 3/4. Functions in the biosynthesis of branched-chain amino acids. Catalyzes the dehydration of (2R,3R)-2,3-dihydroxy-3-methylpentanoate (2,3-dihydroxy-3-methylvalerate) into 2-oxo-3-methylpentanoate (2-oxo-3-methylvalerate) and of (2R)-2,3-dihydroxy-3-methylbutanoate (2,3-dihydroxyisovalerate) into 2-oxo-3-methylbutanoate (2-oxoisovalerate), the penultimate precursor to L-isoleucine and L-valine, respectively. This chain is Dihydroxy-acid dehydratase, found in Aliivibrio fischeri (strain ATCC 700601 / ES114) (Vibrio fischeri).